A 279-amino-acid chain; its full sequence is PHO85 cyclin-1 (279 aa).

One can recognise a Cyclin N-terminal domain in the interval 19–152; that stretch reads DIIKFLTDTT…LLQLLNWDLR (134 aa). Residues 29–36 form a required for degradation by DMA1 region; that stretch reads LRVVPSSN. Threonine 39 bears the Phosphothreonine; by PHO85 mark. Serine 43 bears the Phosphoserine; by PHO85 mark. Residues lysine 82 and lysine 121 each participate in a glycyl lysine isopeptide (Lys-Gly) (interchain with G-Cter in ubiquitin) cross-link.

The protein belongs to the cyclin family. PCL1,2 subfamily. As to quaternary structure, forms a cyclin-CDK complex with PHO85. Interacts with HMS1, NCP1 and NPA3. Interacts with DMA1. Phosphorylated by PHO85; necessary for interaction with DMA1 and subsequent degradation. Post-translationally, ubiquitinated by E3 ubiquitin ligase DMA1 in response to nutrient condition; this targets PCL1 for destruction.

The protein resides in the cytoplasm. The protein localises to the nucleus. G1/S-specific cyclin partner of the cyclin-dependent kinase (CDK) PHO85. Essential for the control of the cell cycle at the G1/S (start) transition. The PCL1-PHO85 cyclin-CDK holoenzyme is involved in phosphorylation of the CDK inhibitor (CKI) SIC1, which is required for its ubiquitination and degradation, releasing repression of b-type cyclins and promoting exit from mitosis. Together with cyclin PCL2, positively controls degradation of sphingoid long chain base kinase LCB4. PCL1-PHO85 phosphorylates LCB4, which is required for its ubiquitination and degradation. PCL1-PHO85 also phosphorylates HMS1, NCP1 and NPA3, which may all have a role in mitotic exit. This Saccharomyces cerevisiae (strain ATCC 204508 / S288c) (Baker's yeast) protein is PHO85 cyclin-1.